Reading from the N-terminus, the 166-residue chain is Phosphopantetheine adenylyltransferase (166 aa).

Position 9 (serine 9) interacts with substrate. Residues 9–10 (SF) and histidine 17 each bind ATP. Residues lysine 41, threonine 74, and arginine 88 each coordinate substrate. ATP is bound by residues 89 to 91 (GLR), glutamate 99, and 124 to 130 (DSFISSS).

Belongs to the bacterial CoaD family. As to quaternary structure, homohexamer. Mg(2+) serves as cofactor.

It is found in the cytoplasm. It catalyses the reaction (R)-4'-phosphopantetheine + ATP + H(+) = 3'-dephospho-CoA + diphosphate. It participates in cofactor biosynthesis; coenzyme A biosynthesis; CoA from (R)-pantothenate: step 4/5. Functionally, reversibly transfers an adenylyl group from ATP to 4'-phosphopantetheine, yielding dephospho-CoA (dPCoA) and pyrophosphate. The protein is Phosphopantetheine adenylyltransferase of Lactobacillus johnsonii (strain CNCM I-12250 / La1 / NCC 533).